Reading from the N-terminus, the 85-residue chain is Large ribosomal subunit protein bL27 (85 aa).

A disordered region spans residues 1–23 (MAHKKAGGSSRNGRDSESKRLGV).

It belongs to the bacterial ribosomal protein bL27 family.

The chain is Large ribosomal subunit protein bL27 from Nitrosococcus oceani (strain ATCC 19707 / BCRC 17464 / JCM 30415 / NCIMB 11848 / C-107).